The sequence spans 416 residues: Gamma-glutamyl phosphate reductase (416 aa).

It belongs to the gamma-glutamyl phosphate reductase family.

It localises to the cytoplasm. It carries out the reaction L-glutamate 5-semialdehyde + phosphate + NADP(+) = L-glutamyl 5-phosphate + NADPH + H(+). The protein operates within amino-acid biosynthesis; L-proline biosynthesis; L-glutamate 5-semialdehyde from L-glutamate: step 2/2. Functionally, catalyzes the NADPH-dependent reduction of L-glutamate 5-phosphate into L-glutamate 5-semialdehyde and phosphate. The product spontaneously undergoes cyclization to form 1-pyrroline-5-carboxylate. This chain is Gamma-glutamyl phosphate reductase, found in Salmonella typhi.